The chain runs to 214 residues: MIASLSGTVEHVALDRAVIAVGGLGVQFSATPQTLSTLHEGRPGAVQTHLVVKEDALTLYGFADRDEREVFEVLITANGVGPRLALAILSVHHPETVRRAVTEEDEKTLTRVPGIGPKMARKIIVELSGRLAPTGEPVPGAEAEASDEPAVETVWHADVVQAMAGLGWSEKEALKAVEATVAARPELDEGRDVAALLRATLRDVGMAGAVRGGR.

The tract at residues 1–63 (MIASLSGTVE…EDALTLYGFA (63 aa)) is domain I. Positions 64-142 (DRDEREVFEV…PTGEPVPGAE (79 aa)) are domain II. A flexible linker region spans residues 143-151 (AEASDEPAV). Positions 151 to 214 (VETVWHADVV…GMAGAVRGGR (64 aa)) are domain III.

It belongs to the RuvA family. Homotetramer. Forms an RuvA(8)-RuvB(12)-Holliday junction (HJ) complex. HJ DNA is sandwiched between 2 RuvA tetramers; dsDNA enters through RuvA and exits via RuvB. An RuvB hexamer assembles on each DNA strand where it exits the tetramer. Each RuvB hexamer is contacted by two RuvA subunits (via domain III) on 2 adjacent RuvB subunits; this complex drives branch migration. In the full resolvosome a probable DNA-RuvA(4)-RuvB(12)-RuvC(2) complex forms which resolves the HJ.

Its subcellular location is the cytoplasm. The RuvA-RuvB-RuvC complex processes Holliday junction (HJ) DNA during genetic recombination and DNA repair, while the RuvA-RuvB complex plays an important role in the rescue of blocked DNA replication forks via replication fork reversal (RFR). RuvA specifically binds to HJ cruciform DNA, conferring on it an open structure. The RuvB hexamer acts as an ATP-dependent pump, pulling dsDNA into and through the RuvAB complex. HJ branch migration allows RuvC to scan DNA until it finds its consensus sequence, where it cleaves and resolves the cruciform DNA. This is Holliday junction branch migration complex subunit RuvA from Micrococcus luteus (strain ATCC 4698 / DSM 20030 / JCM 1464 / CCM 169 / CCUG 5858 / IAM 1056 / NBRC 3333 / NCIMB 9278 / NCTC 2665 / VKM Ac-2230) (Micrococcus lysodeikticus).